A 485-amino-acid chain; its full sequence is Regulatory protein ViaA (485 aa).

It belongs to the ViaA family. Homodimer. Interacts with RavA.

Its subcellular location is the cytoplasm. Functionally, component of the RavA-ViaA chaperone complex, which may act on the membrane to optimize the function of some of the respiratory chains. ViaA stimulates the ATPase activity of RavA. This chain is Regulatory protein ViaA, found in Proteus mirabilis (strain HI4320).